We begin with the raw amino-acid sequence, 341 residues long: Eukaryotic translation initiation factor 3 subunit I (341 aa).

6 WD repeats span residues Gly8–Thr47, Gly56–Thr95, Leu151–Ala190, Glu194–Val233, Thr235–Glu274, and Gly291–Pro331.

Belongs to the eIF-3 subunit I family. In terms of assembly, component of the eukaryotic translation initiation factor 3 (eIF-3) complex.

The protein localises to the cytoplasm. Its function is as follows. Component of the eukaryotic translation initiation factor 3 (eIF-3) complex, which is involved in protein synthesis of a specialized repertoire of mRNAs and, together with other initiation factors, stimulates binding of mRNA and methionyl-tRNAi to the 40S ribosome. The eIF-3 complex specifically targets and initiates translation of a subset of mRNAs involved in cell proliferation. This Cryptococcus neoformans var. neoformans serotype D (strain B-3501A) (Filobasidiella neoformans) protein is Eukaryotic translation initiation factor 3 subunit I.